Here is a 381-residue protein sequence, read N- to C-terminus: DNA double-strand break repair protein Mre11 (381 aa).

Residues Asp9, His11, Asp50, and Asp85 each contribute to the Mn(2+) site. The Proton donor role is filled by His86. The Mn(2+) site is built by His156, His187, and His189.

The protein belongs to the MRE11/RAD32 family. In terms of assembly, homodimer. Forms a heterotetramer composed of two Mre11 subunits and two Rad50 subunits. Requires Mn(2+) as cofactor.

Nuclease activity is regulated by Rad50. Part of the Rad50/Mre11 complex, which is involved in the early steps of DNA double-strand break (DSB) repair. The complex may facilitate opening of the processed DNA ends to aid in the recruitment of HerA and NurA. Mre11 binds to DSB ends and has both double-stranded 3'-5' exonuclease activity and single-stranded endonuclease activity. This Saccharolobus solfataricus (strain ATCC 35092 / DSM 1617 / JCM 11322 / P2) (Sulfolobus solfataricus) protein is DNA double-strand break repair protein Mre11.